A 163-amino-acid chain; its full sequence is Centrosomal protein of 19 kDa (163 aa).

This sequence belongs to the CEP19 family. As to quaternary structure, interacts with CEP43; this interaction is required for its localization to the mother centriole. Interacts (via residues 121-150) with RABL2B. Interacts (via C-terminus) with CEP350; this interaction is required for its localization to the mother centriole.

It localises to the cytoplasm. The protein resides in the cytoskeleton. The protein localises to the microtubule organizing center. It is found in the centrosome. Its subcellular location is the centriole. It localises to the spindle pole. The protein resides in the cilium basal body. Its function is as follows. Required for ciliation. Recruits the RABL2B GTPase to the ciliary base to initiate ciliation. After specifically capturing the activated GTP-bound RABL2B, the CEP19-RABL2B complex binds intraflagellar transport (IFT) complex B from the large pool pre-docked at the base of the cilium and thus triggers its entry into the cilia. Involved in the early steps in cilia formation by recruiting the ciliary vesicles (CVs) to the distal end of the mother centriole where they fuse to initiate cilium assembly. Involved in microtubule (MT) anchoring to the centrosomes. The polypeptide is Centrosomal protein of 19 kDa (CEP19) (Homo sapiens (Human)).